Here is a 150-residue protein sequence, read N- to C-terminus: Large ribosomal subunit protein bL9 (150 aa).

It belongs to the bacterial ribosomal protein bL9 family.

Functionally, binds to the 23S rRNA. This is Large ribosomal subunit protein bL9 from Polaromonas sp. (strain JS666 / ATCC BAA-500).